The sequence spans 627 residues: 1-deoxy-D-xylulose-5-phosphate synthase (627 aa).

Thiamine diphosphate contacts are provided by residues His-80 and 121–123; that span reads GHS. Residue Asp-152 participates in Mg(2+) binding. Thiamine diphosphate contacts are provided by residues 153-154, Asn-181, Tyr-288, and Glu-370; that span reads GA. Asn-181 provides a ligand contact to Mg(2+).

This sequence belongs to the transketolase family. DXPS subfamily. In terms of assembly, homodimer. Mg(2+) serves as cofactor. Thiamine diphosphate is required as a cofactor.

It carries out the reaction D-glyceraldehyde 3-phosphate + pyruvate + H(+) = 1-deoxy-D-xylulose 5-phosphate + CO2. It functions in the pathway metabolic intermediate biosynthesis; 1-deoxy-D-xylulose 5-phosphate biosynthesis; 1-deoxy-D-xylulose 5-phosphate from D-glyceraldehyde 3-phosphate and pyruvate: step 1/1. Functionally, catalyzes the acyloin condensation reaction between C atoms 2 and 3 of pyruvate and glyceraldehyde 3-phosphate to yield 1-deoxy-D-xylulose-5-phosphate (DXP). The protein is 1-deoxy-D-xylulose-5-phosphate synthase of Aliivibrio fischeri (strain MJ11) (Vibrio fischeri).